The chain runs to 141 residues: Hemoglobin subunit alpha-A (141 aa).

The Globin domain maps to 1–141 (VLSASDKTNV…VAKELTAKYR (141 aa)). His58 provides a ligand contact to O2. His87 contributes to the heme b binding site.

Belongs to the globin family. Heterotetramer of two alpha chains and two beta chains. In terms of tissue distribution, red blood cells.

In terms of biological role, involved in oxygen transport from the lung to the various peripheral tissues. The sequence is that of Hemoglobin subunit alpha-A (HBAA) from Phalacrocorax carbo (Great cormorant).